A 507-amino-acid chain; its full sequence is Maturase K (507 aa).

It belongs to the intron maturase 2 family. MatK subfamily.

The protein localises to the plastid. It localises to the chloroplast. Functionally, usually encoded in the trnK tRNA gene intron. Probably assists in splicing its own and other chloroplast group II introns. This Annona muricata (Soursop) protein is Maturase K.